Consider the following 311-residue polypeptide: Pyrimidine-specific ribonucleoside hydrolase RihA (311 aa).

The active site involves His-240.

The protein belongs to the IUNH family. RihA subfamily.

Functionally, hydrolyzes with equal efficiency cytidine or uridine to ribose and cytosine or uracil, respectively. The sequence is that of Pyrimidine-specific ribonucleoside hydrolase RihA from Escherichia coli O127:H6 (strain E2348/69 / EPEC).